A 399-amino-acid polypeptide reads, in one-letter code: Acetate kinase (399 aa).

Asparagine 7 is a Mg(2+) binding site. Position 14 (lysine 14) interacts with ATP. Residue arginine 91 participates in substrate binding. Catalysis depends on aspartate 148, which acts as the Proton donor/acceptor. ATP is bound by residues 208–212, 283–285, and 331–335; these read HLGNG, DFR, and GIGEN. Position 384 (glutamate 384) interacts with Mg(2+).

Belongs to the acetokinase family. As to quaternary structure, homodimer. Mg(2+) serves as cofactor. Mn(2+) is required as a cofactor.

The protein resides in the cytoplasm. The enzyme catalyses acetate + ATP = acetyl phosphate + ADP. It functions in the pathway metabolic intermediate biosynthesis; acetyl-CoA biosynthesis; acetyl-CoA from acetate: step 1/2. Catalyzes the formation of acetyl phosphate from acetate and ATP. Can also catalyze the reverse reaction. This is Acetate kinase from Acetivibrio thermocellus (strain ATCC 27405 / DSM 1237 / JCM 9322 / NBRC 103400 / NCIMB 10682 / NRRL B-4536 / VPI 7372) (Clostridium thermocellum).